The following is a 156-amino-acid chain: LIM domain only protein 3 (156 aa).

LIM zinc-binding domains follow at residues 22–84 (KGCA…LFGV) and 86–148 (GNCA…GLMK).

The protein is LIM domain only protein 3 of Xenopus laevis (African clawed frog).